The sequence spans 381 residues: tRNA N6-adenosine threonylcarbamoyltransferase (381 aa).

Positions 114 and 118 each coordinate Fe cation. Substrate contacts are provided by residues 142–146 (VVSGG), D178, G191, D195, and N321. D349 lines the Fe cation pocket.

It belongs to the KAE1 / TsaD family. It depends on Fe(2+) as a cofactor.

It localises to the cytoplasm. The enzyme catalyses L-threonylcarbamoyladenylate + adenosine(37) in tRNA = N(6)-L-threonylcarbamoyladenosine(37) in tRNA + AMP + H(+). Its function is as follows. Required for the formation of a threonylcarbamoyl group on adenosine at position 37 (t(6)A37) in tRNAs that read codons beginning with adenine. Is involved in the transfer of the threonylcarbamoyl moiety of threonylcarbamoyl-AMP (TC-AMP) to the N6 group of A37, together with TsaE and TsaB. TsaD likely plays a direct catalytic role in this reaction. This chain is tRNA N6-adenosine threonylcarbamoyltransferase, found in Koribacter versatilis (strain Ellin345).